A 105-amino-acid polypeptide reads, in one-letter code: Ketoisovalerate oxidoreductase subunit VorD (105 aa).

4Fe-4S ferredoxin-type domains are found at residues 44 to 73 and 74 to 103; these read FMPV…IKED and GFVA…MVRE. [4Fe-4S] cluster is bound by residues cysteine 53, cysteine 56, cysteine 59, cysteine 63, cysteine 83, cysteine 86, cysteine 89, and cysteine 93.

In terms of assembly, heterotetramer of one alpha, one beta, one delta and one gamma chain. It depends on [4Fe-4S] cluster as a cofactor.

It catalyses the reaction 3-methyl-2-oxobutanoate + 2 oxidized [2Fe-2S]-[ferredoxin] + CoA = 2-methylpropanoyl-CoA + 2 reduced [2Fe-2S]-[ferredoxin] + CO2 + H(+). This Pyrococcus abyssi (strain GE5 / Orsay) protein is Ketoisovalerate oxidoreductase subunit VorD (vorD).